We begin with the raw amino-acid sequence, 364 residues long: Doublecortin domain-containing protein 2C (364 aa).

Doublecortin domains follow at residues 16–98 (KTIV…LDYI) and 136–217 (RHIN…FPYW). Residues 233–255 (VEKNSQRKKKVDSKGKEPCKYDG) form a disordered region.

Expressed in testis and spermatozoa (at protein level).

The protein localises to the cell projection. It is found in the cilium. Its subcellular location is the flagellum. The protein resides in the cytoplasm. The protein is Doublecortin domain-containing protein 2C of Homo sapiens (Human).